A 726-amino-acid polypeptide reads, in one-letter code: F-box protein COS111 (726 aa).

Positions 143–194 (FADINCLPEEIICRIIANLNDADSQRNCLLVSQEWSECAKRIIYKDVKFTST) constitute an F-box domain. A disordered region spans residues 276 to 295 (RSRTRRSSDASSMNSSVFSH). The segment covering 284–295 (DASSMNSSVFSH) has biased composition (low complexity).

In terms of biological role, F-box protein probably involved in ubiquitin conjugation pathway. This is F-box protein COS111 (COS111) from Kluyveromyces lactis (strain ATCC 8585 / CBS 2359 / DSM 70799 / NBRC 1267 / NRRL Y-1140 / WM37) (Yeast).